The sequence spans 1674 residues: E3 ubiquitin-protein ligase SHPRH (1674 aa).

Residues 1–26 are disordered; the sequence is MSSRRKRAPPMKVDEERQQQLHWNMH. Residues 12–26 are compositionally biased toward basic and acidic residues; the sequence is KVDEERQQQLHWNMH. Phosphoserine is present on residues Ser-259 and Ser-261. Residues 302 to 384 enclose the Helicase ATP-binding; first part domain; sequence YQREAVNWML…TVEVLALILT (83 aa). ATP is bound at residue 368–375; it reads DEMGLGKT. The 75-residue stretch at 433 to 507 folds into the H15 domain; that stretch reads HCPPTRVMIL…GFSGTFTLGK (75 aa). The tract at residues 524 to 548 is disordered; it reads SPRKIEKELRKSVNKDADSEYLPSN. Basic and acidic residues predominate over residues 526–541; that stretch reads RKIEKELRKSVNKDAD. At Ser-626 the chain carries Phosphoserine. Residues 649–700 form a PHD-type zinc finger; the sequence is RFECICGEFDQIGHKPRVQCLKCHLWQHAKCVNYEEKNLKVKPFYCPHCLVA. The region spanning 701-859 is the Helicase ATP-binding; second part domain; sequence MEPVSTRATL…FGLVVFLGIE (159 aa). The short motif at 810-813 is the DEAQ box element; that stretch reads DEAQ. The segment at 1423 to 1470 adopts an RING-type zinc-finger fold; that stretch reads CPICARQLGKQWAVLTCGHCFCNECTSIIIEQYSVGSHRSSIKCAICR. The Helicase C-terminal domain maps to 1505 to 1663; it reads AVVRTLMKIQ…ASVLTVAGLA (159 aa).

This sequence belongs to the SNF2/RAD54 helicase family. As to quaternary structure, homodimer. Interacts with HLTF, PCNA, UBE2N and RAD18. Broadly expressed (at protein level).

The enzyme catalyses S-ubiquitinyl-[E2 ubiquitin-conjugating enzyme]-L-cysteine + [acceptor protein]-L-lysine = [E2 ubiquitin-conjugating enzyme]-L-cysteine + N(6)-ubiquitinyl-[acceptor protein]-L-lysine.. The protein operates within protein modification; protein ubiquitination. Its function is as follows. E3 ubiquitin-protein ligase involved in DNA repair. Upon genotoxic stress, accepts ubiquitin from the UBE2N-UBE2V2 E2 complex and transfers it to 'Lys-164' of PCNA which had been monoubiquitinated by UBE2A/B-RAD18, promoting the formation of non-canonical poly-ubiquitin chains linked through 'Lys-63'. This Mus musculus (Mouse) protein is E3 ubiquitin-protein ligase SHPRH (Shprh).